We begin with the raw amino-acid sequence, 86 residues long: MSEIKFYLVKGSALFGESHYPEKRKFVKIVRALNEKQAIEYIYSYFGSKNKIKRYNIKIEQISEIKEEEIPDRRIRELAKIDKIIM.

It belongs to the eukaryotic ribosomal protein eL20 family. As to quaternary structure, part of the 50S ribosomal subunit. Binds 23S rRNA.

This is Large ribosomal subunit protein eL20 from Saccharolobus islandicus (strain Y.N.15.51 / Yellowstone #2) (Sulfolobus islandicus).